An 858-amino-acid chain; its full sequence is DNA mismatch repair protein MutS (858 aa).

618 to 625 (GPNMGGKS) serves as a coordination point for ATP.

It belongs to the DNA mismatch repair MutS family.

This protein is involved in the repair of mismatches in DNA. It is possible that it carries out the mismatch recognition step. This protein has a weak ATPase activity. This chain is DNA mismatch repair protein MutS, found in Shewanella woodyi (strain ATCC 51908 / MS32).